Here is a 553-residue protein sequence, read N- to C-terminus: Membrane protein insertase YidC (553 aa).

Residues 6–26 (LIALVLSLLVLVFWEMYFGLF) form a helical membrane-spanning segment. Residues 34-59 (NKTEQAAPTTTQPATPQTVPPQAATP) are disordered. A compositionally biased stretch (low complexity) spans 38–59 (QAAPTTTQPATPQTVPPQAATP). Helical transmembrane passes span 331–351 (LASAVDYGWFTFIAKPLVYVL), 360–380 (NWGVAIILLTIVIKILFWPLT), 424–444 (VNPMGGCLPMLLQIPVFFALY), 477–497 (IPYLGGLPVLTLLMGITMFIQ), and 512–532 (IMMIMPVMFTVFFVNFPSGLV).

It belongs to the OXA1/ALB3/YidC family. Type 1 subfamily. As to quaternary structure, interacts with the Sec translocase complex via SecD. Specifically interacts with transmembrane segments of nascent integral membrane proteins during membrane integration.

The protein resides in the cell inner membrane. Its function is as follows. Required for the insertion and/or proper folding and/or complex formation of integral membrane proteins into the membrane. Involved in integration of membrane proteins that insert both dependently and independently of the Sec translocase complex, as well as at least some lipoproteins. Aids folding of multispanning membrane proteins. This chain is Membrane protein insertase YidC, found in Syntrophobacter fumaroxidans (strain DSM 10017 / MPOB).